Here is a 223-residue protein sequence, read N- to C-terminus: Ribose-5-phosphate isomerase A (223 aa).

Substrate contacts are provided by residues 29 to 32 (TGST), 82 to 85 (DGAD), and 95 to 98 (KGGG). E104 (proton acceptor) is an active-site residue. K122 serves as a coordination point for substrate.

This sequence belongs to the ribose 5-phosphate isomerase family. As to quaternary structure, homodimer.

The enzyme catalyses aldehydo-D-ribose 5-phosphate = D-ribulose 5-phosphate. Its pathway is carbohydrate degradation; pentose phosphate pathway; D-ribose 5-phosphate from D-ribulose 5-phosphate (non-oxidative stage): step 1/1. Functionally, catalyzes the reversible conversion of ribose-5-phosphate to ribulose 5-phosphate. This chain is Ribose-5-phosphate isomerase A, found in Neisseria gonorrhoeae (strain ATCC 700825 / FA 1090).